The chain runs to 369 residues: Phosphate-binding protein PstS 3 (369 aa).

Residues 1 to 21 form the signal peptide; that stretch reads MKLNQFGAAIGLLATGALLSG. The N-palmitoyl cysteine moiety is linked to residue C22. The S-diacylglycerol cysteine moiety is linked to residue C22. Phosphate-binding positions include 55–57, S85, D103, and 190–192; these read STA and SGT.

Belongs to the PstS family. In terms of assembly, the complex is composed of two ATP-binding proteins (PstB), two transmembrane proteins (PstC and PstA) and a solute-binding protein (PstS).

Its subcellular location is the cell membrane. Part of the ABC transporter complex PstSACB involved in phosphate import. The chain is Phosphate-binding protein PstS 3 (pstS2) from Mycobacterium leprae (strain TN).